The following is a 304-amino-acid chain: GTPase Era (304 aa).

The Era-type G domain occupies 11 to 179; sequence YCGFIAIVGR…QKIVRKSLRE (169 aa). Residues 19 to 26 are G1; sequence GRPNVGKS. Residue 19-26 participates in GTP binding; it reads GRPNVGKS. The segment at 45–49 is G2; the sequence is QTTRH. Positions 66–69 are G3; that stretch reads DTPG. Residues 66 to 70 and 128 to 131 contribute to the GTP site; these read DTPGL and NKVD. A G4 region spans residues 128–131; sequence NKVD. The tract at residues 158–160 is G5; that stretch reads ISA. The KH type-2 domain occupies 210-287; sequence TGEELPYSVT…HLELWVKVKA (78 aa).

Belongs to the TRAFAC class TrmE-Era-EngA-EngB-Septin-like GTPase superfamily. Era GTPase family. In terms of assembly, monomer.

It is found in the cytoplasm. It localises to the cell inner membrane. Its function is as follows. An essential GTPase that binds both GDP and GTP, with rapid nucleotide exchange. Plays a role in 16S rRNA processing and 30S ribosomal subunit biogenesis and possibly also in cell cycle regulation and energy metabolism. This Actinobacillus pleuropneumoniae serotype 3 (strain JL03) protein is GTPase Era.